A 234-amino-acid polypeptide reads, in one-letter code: MTKKNASIPLRYLSSIVFVVFLPWWIPLSFNKSLESWVTNWWNTSQSETFLNDIQEKAILEKFIELEELFLLDEMIKEFPERRLEKLRIGLQKETIQLIKMHDEDHIHTIFHFSTNTICFVILSGYSILCNEELFILNSWVQEFLYNLSDTIKAFSILFVTDLCIGFHSPRGWELLIGYVYNDFGLAHNDNDIILSVLVSTFPVVLDTFFKYWLFSYLNRVSPSLVVIYHSMTE.

The next 4 membrane-spanning stretches (helical) occupy residues 8–28, 117–137, 157–177, and 193–213; these read IPLR…WIPL, TICF…LFIL, ILFV…ELLI, and IILS…FKYW.

Belongs to the CemA family.

The protein localises to the plastid. The protein resides in the chloroplast inner membrane. The catalysed reaction is K(+)(in) + H(+)(out) = K(+)(out) + H(+)(in). Its function is as follows. Contributes to K(+)/H(+) antiport activity by supporting proton efflux to control proton extrusion and homeostasis in chloroplasts in a light-dependent manner to modulate photosynthesis. Prevents excessive induction of non-photochemical quenching (NPQ) under continuous-light conditions. Indirectly promotes efficient inorganic carbon uptake into chloroplasts. This Citrus sinensis (Sweet orange) protein is Potassium/proton antiporter CemA.